The chain runs to 553 residues: Adenine deaminase (553 aa).

It belongs to the metallo-dependent hydrolases superfamily. Adenine deaminase family. Mn(2+) serves as cofactor.

The enzyme catalyses adenine + H2O + H(+) = hypoxanthine + NH4(+). The sequence is that of Adenine deaminase from Methanosarcina acetivorans (strain ATCC 35395 / DSM 2834 / JCM 12185 / C2A).